The following is a 184-amino-acid chain: Thymidine kinase (184 aa).

Residues 10–17 (GPMYSGKT) and 83–86 (DEVQ) contribute to the ATP site. Glu84 functions as the Proton acceptor in the catalytic mechanism. Cys140, Cys143, Cys173, and Cys176 together coordinate Zn(2+).

The protein belongs to the thymidine kinase family. As to quaternary structure, homotetramer.

It localises to the cytoplasm. It carries out the reaction thymidine + ATP = dTMP + ADP + H(+). The chain is Thymidine kinase from Thermotoga petrophila (strain ATCC BAA-488 / DSM 13995 / JCM 10881 / RKU-1).